The chain runs to 553 residues: MSKPRKQQKCKTCGHTQFDVNRYTAAGDVSCLRCGTVLEENPIVSEVQFGESSSGAAMVQGAMVGADQARATFAGGRQNAMESREQTLSNGKRKIKRIAAALKIPDYIAEAAGEWFRLALTLNFVQGRRSNNVLATCLYVACRKERTHHMLIDFSSRLQISVYSLGATFLKMVKALHITSLPLADPSLFIQHFVEKLDFKDKATKVAKDAVKLAHRMAADWIHEGRRPAGIAGACVLLAARMNNFRRSHAEIVAVSHVGEETLQRRLNEFKKTKAGTLSVKSFREVENLESSNPPSFEKNRAMELKISKKLQQQQTDNFEDLSKMTEEEKQSVFGKLSKEEAQKQLLMNTILSDITITTENLNDQMDRILKMKKSSLENSLYKTPYELALANGSEQDPSKIWNINKPKNLVANLPKTDDILQNVSSEVELNSDDDDEIVLESKLTEEEVAIKERIWTGLNHDYLVEQEKKRLKQEADELTGNTSKSSSGNRRKRNKSSLPAELRKELGDIDLDEDGTPRSAADSAKMYISKTSVSKKINYDSLKGLLGGNMGF.

The segment at 6-39 adopts a TFIIB-type zinc-finger fold; that stretch reads KQQKCKTCGHTQFDVNRYTAAGDVSCLRCGTVLE. 4 residues coordinate Zn(2+): cysteine 10, cysteine 13, cysteine 31, and cysteine 34. Repeat copies occupy residues 98-174 and 193-272. The interaction with TBP and with the Pol III subunit C34 stretch occupies residues 98 to 272; that stretch reads IAAALKIPDY…LQRRLNEFKK (175 aa). Residues 281-553 form an interaction with TBP region; it reads KSFREVENLE…KGLLGGNMGF (273 aa). Residues 473–523 are disordered; that stretch reads KQEADELTGNTSKSSSGNRRKRNKSSLPAELRKELGDIDLDEDGTPRSAAD. The span at 480–489 shows a compositional bias: low complexity; that stretch reads TGNTSKSSSG.

It belongs to the TFIIB family. In terms of assembly, TFIIIB comprises the TATA-binding protein (TBP), the B-related factor (BRF) and a 70 kDa polypeptide.

It localises to the nucleus. Its function is as follows. General activator of RNA polymerase III transcription. Interacts with TBP. Binds to Pol III subunit C34 and to the TAU135 component of TFIIIC. This chain is Transcription factor IIIB 70 kDa subunit (TDS4), found in Candida albicans (strain SC5314 / ATCC MYA-2876) (Yeast).